Here is a 496-residue protein sequence, read N- to C-terminus: Probable cytosol aminopeptidase (496 aa).

The Mn(2+) site is built by Lys-264 and Asp-269. The active site involves Lys-276. 3 residues coordinate Mn(2+): Asp-287, Asp-346, and Glu-348. Arg-350 is an active-site residue.

Belongs to the peptidase M17 family. Mn(2+) serves as cofactor.

The protein localises to the cytoplasm. It catalyses the reaction Release of an N-terminal amino acid, Xaa-|-Yaa-, in which Xaa is preferably Leu, but may be other amino acids including Pro although not Arg or Lys, and Yaa may be Pro. Amino acid amides and methyl esters are also readily hydrolyzed, but rates on arylamides are exceedingly low.. The catalysed reaction is Release of an N-terminal amino acid, preferentially leucine, but not glutamic or aspartic acids.. Functionally, presumably involved in the processing and regular turnover of intracellular proteins. Catalyzes the removal of unsubstituted N-terminal amino acids from various peptides. This chain is Probable cytosol aminopeptidase, found in Geobacter sulfurreducens (strain ATCC 51573 / DSM 12127 / PCA).